The sequence spans 125 residues: Large ribosomal subunit protein uL22c (125 aa).

This sequence belongs to the universal ribosomal protein uL22 family. Part of the 50S ribosomal subunit.

It localises to the plastid. The protein resides in the chloroplast. Functionally, this protein binds specifically to 23S rRNA. The globular domain of the protein is located near the polypeptide exit tunnel on the outside of the subunit, while an extended beta-hairpin is found that lines the wall of the exit tunnel in the center of the 70S ribosome. This Huperzia lucidula (Shining clubmoss) protein is Large ribosomal subunit protein uL22c (rpl22).